We begin with the raw amino-acid sequence, 579 residues long: MSTASAASSSSSSSAGEMIEAPSQVLNFEEIDYKEIEVEEVVGRGAFGVVCKAKWRAKDVAIKQIESESERKAFIVELRQLSRVNHPNIVKLYGACLNPVCLVMEYAEGGSLYNVLHGAEPLPYYTAAHAMSWCLQCSQGVAYLHSMQPKALIHRDLKPPNLLLVAGGTVLKICDFGTACDIQTHMTNNKGSAAWMAPEVFEGSNYSEKCDVFSWGIILWEVITRRKPFDEIGGPAFRIMWAVHNGTRPPLIKNLPKPIESLMTRCWSKDPSQRPSMEEIVKIMTHLMRYFPGADEPLQYPCQYSDEGQSNSATSTGSFMDITSTNTSNKSDTNMEQVPATNDTIKRLESKLLKNQAKQQSESGRLSLGASRGSSVESLPPTSEGKRMSADMSEIEARIAATTGNGQPRRRSIQDLTVTGTDPGQVSSRSSSPSVRMITTSGPTSEKPARSHPWTPDDSTDTNGSDNSIPMAYLTLDHQLQPLAPCPNSKESMAVFEQHCKMAQEYMKVQTEIALLLQRKQELVAELDQDEKDQQNTSRLVQEHKKLLDENKSLSTYYQQCKKQLEVIRSQQQKRQGTS.

The interaction with MAPK8IP1 stretch occupies residues methionine 1–tyrosine 300. A Protein kinase domain is found at isoleucine 36–phenylalanine 291. ATP contacts are provided by residues valine 42–valine 50 and lysine 63. Lysine 72 is covalently cross-linked (Glycyl lysine isopeptide (Lys-Gly) (interchain with G-Cter in ubiquitin)). Aspartate 156 acts as the Proton acceptor in catalysis. Residue lysine 158 forms a Glycyl lysine isopeptide (Lys-Gly) (interchain with G-Cter in ubiquitin) linkage. Residues threonine 184 and threonine 187 each carry the phosphothreonine; by autocatalysis modification. At serine 192 the chain carries Phosphoserine; by autocatalysis. A Glycyl lysine isopeptide (Lys-Gly) (interchain with G-Cter in ubiquitin) cross-link involves residue lysine 209. 2 disordered regions span residues proline 301–proline 339 and lysine 354–aspartate 391. Residues aspartate 306–isoleucine 322 are compositionally biased toward polar residues. 2 stretches are compositionally biased toward low complexity: residues threonine 323–asparagine 334 and serine 361–serine 375. Phosphoserine occurs at positions 367, 389, and 412. Positions leucine 416–glutamine 425 are enriched in polar residues. Residues leucine 416–aspartate 466 form a disordered region. Positions valine 426 to arginine 436 are enriched in low complexity. Serine 428 carries the post-translational modification Phosphoserine.

It belongs to the protein kinase superfamily. STE Ser/Thr protein kinase family. MAP kinase kinase kinase subfamily. In terms of assembly, can form homodimer. Binds both upstream activators and downstream substrates in multimolecular complexes. Interacts with TAB1/MAP3K7IP1, TAB2/MAP3K7IP2 and TAB3/MAP3K7IP3. Identified in the TRIKA2 complex composed of MAP3K7/TAK1, TAB1/MAP3K7IP1 and TAB2/MAP3K7IP2. Interacts with PPM1L and PPM1B/PP2CB. Interaction with PP2A and PPP6C leads to its repressed activity. Interacts with TRAF6 and TAB1/MAP3K7IP1; during IL-1 signaling. Interacts with TAOK1 and TAOK2; interaction with TAOK2 interferes with MAP3K7 interaction with IKKA, thus preventing NF-kappa-B activation. Interacts with DYNC2I2 (via WD domains). Interacts with CYLD and RBCK1. Interacts with TGFBR1; induces MAP3K7/TAK1 activation by TRAF6. Interacts with MAPK8IP1 and SMAD6. Interacts with isoform 1 of VRK2. Interacts with DAB2; the interaction is induced by TGF-beta stimulation and may mediate TGF-beta stimulated JNK activation. Interacts with TRIM5. Part of a complex containing ITCH, NDFIP1 and MAP3K7. Interacts with IFIT5; the interaction synergizes the recruitment of IKK to MAP3K7 and enhances IKK phosphorylation. Interacts with PLEKHM1 (via N- and C-terminus). Found in a complex with SH3RF1, RAC2, MAP2K7/MKK7, MAPK8IP1/JIP1, MAPK8/JNK1 and MAPK9/JNK2. Interacts with SASH1. Interacts with RIPK1. Mg(2+) serves as cofactor. In terms of processing, association with TAB1/MAP3K7IP1 promotes autophosphorylation at Ser-192 and subsequent activation. Association with TAB2/MAP3K7IP2, itself associated with free unanchored Lys-63 polyubiquitin chain, promotes autophosphorylation and subsequent activation of MAP3K7. Dephosphorylation at Ser-192 by PPM1B/PP2CB and at Thr-187 by PP2A and PPP6C leads to inactivation. 'Lys-48'-linked polyubiquitination at Lys-72 is induced by TNFalpha, and leads to proteasomal degradation. Undergoes 'Lys-48'-linked polyubiquitination catalyzed by ITCH. 'Lys-63'-linked polyubiquitination at Lys-158 by TRIM8 does not lead to proteasomal degradation but contributes to autophosphorylation and activation. Deubiquitinated by CYLD, a protease that selectively cleaves 'Lys-63'-linked ubiquitin chains. Deubiquitinated by USP19; leading to negative regulation of TNF-alpha- and IL-1beta-triggered NF-kappa-B activation.

The protein localises to the cytoplasm. The protein resides in the cell membrane. The enzyme catalyses L-seryl-[protein] + ATP = O-phospho-L-seryl-[protein] + ADP + H(+). It carries out the reaction L-threonyl-[protein] + ATP = O-phospho-L-threonyl-[protein] + ADP + H(+). Activated by pro-inflammatory cytokines and in response to physical and chemical stresses, including osmotic stress, oxidative stress, arsenic and ultraviolet light irradiation. Activated by 'Lys-63'-linked polyubiquitination and by autophosphorylation. Association with TAB1/MAP3K7IP1 and TAB2/MAP3K7IP2 promotes activation through autophosphorylation, whereas PPM1B/PP2CB, PP2A and PPP6C dephosphorylation leads to inactivation. Ceramides are also able to activate MAP3K7/TAK1. In terms of biological role, serine/threonine kinase which acts as an essential component of the MAP kinase signal transduction pathway. Plays an important role in the cascades of cellular responses evoked by changes in the environment. Mediates signal transduction of TRAF6, various cytokines including interleukin-1 (IL-1), transforming growth factor-beta (TGFB), TGFB-related factors like BMP2 and BMP4, toll-like receptors (TLR), tumor necrosis factor receptor CD40 and B-cell receptor (BCR). Once activated, acts as an upstream activator of the MKK/JNK signal transduction cascade and the p38 MAPK signal transduction cascade through the phosphorylation and activation of several MAP kinase kinases like MAP2K1/MEK1, MAP2K3/MKK3, MAP2K6/MKK6 and MAP2K7/MKK7. These MAP2Ks in turn activate p38 MAPKs and c-jun N-terminal kinases (JNKs); both p38 MAPK and JNK pathways control the transcription factors activator protein-1 (AP-1). Independently of MAP2Ks and p38 MAPKs, acts as a key activator of NF-kappa-B by promoting activation of the I-kappa-B-kinase (IKK) core complex. Mechanistically, recruited to polyubiquitin chains of RIPK2 and IKBKG/NEMO via TAB2/MAP3K7IP2 and TAB3/MAP3K7IP3, and catalyzes phosphorylation and activation of IKBKB/IKKB component of the IKK complex, leading to NF-kappa-B activation. In osmotic stress signaling, plays a major role in the activation of MAPK8/JNK1, but not that of NF-kappa-B. Promotes TRIM5 capsid-specific restriction activity. Phosphorylates RIPK1 at 'Ser-321' which positively regulates RIPK1 interaction with RIPK3 to promote necroptosis but negatively regulates RIPK1 kinase activity and its interaction with FADD to mediate apoptosis. Phosphorylates STING1 in response to cGAMP-activation, promoting association between STEEP1 and STING1 and STING1 translocation to COPII vesicles. The polypeptide is Mitogen-activated protein kinase kinase kinase 7 (MAP3K7) (Bos taurus (Bovine)).